Reading from the N-terminus, the 208-residue chain is 3-demethoxyubiquinol 3-hydroxylase (208 aa).

The Fe cation site is built by Glu57, Glu87, His90, Glu139, Glu171, and His174.

It belongs to the COQ7 family. Requires Fe cation as cofactor.

It localises to the cell membrane. The enzyme catalyses a 5-methoxy-2-methyl-3-(all-trans-polyprenyl)benzene-1,4-diol + AH2 + O2 = a 3-demethylubiquinol + A + H2O. The protein operates within cofactor biosynthesis; ubiquinone biosynthesis. Catalyzes the hydroxylation of 2-nonaprenyl-3-methyl-6-methoxy-1,4-benzoquinol during ubiquinone biosynthesis. The chain is 3-demethoxyubiquinol 3-hydroxylase from Herbaspirillum seropedicae.